The chain runs to 940 residues: MSDYKFTLNLPETEFPMRGNLANREPEMLERWTKDGLYQQIRDSRIGRTPFILHDGPPYANGSIHIGHSVNKILKDIIVKSKTMSGFDAPYVPGWDCHGLPIELKVEQKVGKPGQKISAAEFREECRKYAAEQVDGQRADFIRLGVLGDWQKPYLTMDFATEANIVRSLSKVIENGHLHKGVKPVHWCTDCGSALAEAEVEYEDKTSPAIDVAFTATDSKALAAQFGVSDYSHPVAMVIWTTTPWTLPANRALSISPELDYSLVEFVKDGATHAVILADVLVEACMTRYGAESHNVLGKVKGAALELVRFKHPFLAFDVPAILGDHVTTDAGTGVVHTAPGHGQDDFVVGQKYGLEVANPVGDNGVYKPDTEFFAGQHVFKANDNVVALLKEKGALLHHVAYRHSYPHCWRHKTPIIFRATPQWFISMDNQNLRKQALSEIEQTQWIPDWGQSRIEKMVENRPDWCISRQRTWGVPITLFVHRETEELHPDSVSLMARVANRIEQEGIQAWWDLDAAELLGEEAEQYRKVTDTLDVWYDSGSTFASVVGARPEFHGHGVDLYLEGSDQHRGWFMSSLMISTAMTGKAPYKQVLTHGFTVDGKGRKMSKSIGNVIAPQQVTNKLGADILRLWVAATDYSGEMTVSDEILNRSADAYRRIRNTARFLLANLNGFDPAKDLVAVEDMVALDRWAVRRAAALQQEIIEAYEQYNFHIVTQKLMQFCSVELGSFYLDIIKDRQYTAKQEGHARRSCQSALFHIAEAMVRWIAPILSFTADEVWQLLPGQRDAYVFTQEWYQDLQSITLDTDLSDAYWDNLLTVRNEVNKVIEQARRDKRIGGSLEAEVTLFADAALTEQLTHIGDELRFVLLTSEAKVLPLADATSDAVETELASLKLVVNATTAEKCERCWHHREEVGTIEAHPTLCHRCVTNIEGDGEVRLFA.

Positions 58–68 (PYANGSIHIGH) match the 'HIGH' region motif. Glu564 is an L-isoleucyl-5'-AMP binding site. The short motif at 605–609 (KMSKS) is the 'KMSKS' region element. Lys608 is a binding site for ATP. Cys903, Cys906, Cys923, and Cys926 together coordinate Zn(2+).

This sequence belongs to the class-I aminoacyl-tRNA synthetase family. IleS type 1 subfamily. In terms of assembly, monomer. Zn(2+) serves as cofactor.

It is found in the cytoplasm. It carries out the reaction tRNA(Ile) + L-isoleucine + ATP = L-isoleucyl-tRNA(Ile) + AMP + diphosphate. Catalyzes the attachment of isoleucine to tRNA(Ile). As IleRS can inadvertently accommodate and process structurally similar amino acids such as valine, to avoid such errors it has two additional distinct tRNA(Ile)-dependent editing activities. One activity is designated as 'pretransfer' editing and involves the hydrolysis of activated Val-AMP. The other activity is designated 'posttransfer' editing and involves deacylation of mischarged Val-tRNA(Ile). The sequence is that of Isoleucine--tRNA ligase from Shewanella sp. (strain MR-7).